The chain runs to 430 residues: Adenylosuccinate synthetase (430 aa).

Residues 12 to 18 (GDEGKGK) and 40 to 42 (GHT) each bind GTP. The active-site Proton acceptor is aspartate 13. The Mg(2+) site is built by aspartate 13 and glycine 40. Residues 13–16 (DEGK), 38–41 (NAGH), threonine 130, arginine 144, glutamine 224, threonine 239, and arginine 303 contribute to the IMP site. The Proton donor role is filled by histidine 41. Substrate is bound at residue 299-305 (TNTGRAR). GTP contacts are provided by residues arginine 305, 331–333 (KLD), and 413–415 (STS).

This sequence belongs to the adenylosuccinate synthetase family. As to quaternary structure, homodimer. The cofactor is Mg(2+).

It is found in the cytoplasm. The enzyme catalyses IMP + L-aspartate + GTP = N(6)-(1,2-dicarboxyethyl)-AMP + GDP + phosphate + 2 H(+). Its pathway is purine metabolism; AMP biosynthesis via de novo pathway; AMP from IMP: step 1/2. Plays an important role in the de novo pathway of purine nucleotide biosynthesis. Catalyzes the first committed step in the biosynthesis of AMP from IMP. In Hyphomonas neptunium (strain ATCC 15444), this protein is Adenylosuccinate synthetase.